The chain runs to 581 residues: Sulfate adenylyltransferase (581 aa).

Positions 1–176 (MANAPHGGVL…VQAIQAPTHF (176 aa)) are N-terminal. The segment at 177-401 (DYVPLRYTPA…LRESYPPRPQ (225 aa)) is catalytic. A sulfate-binding site is contributed by Q204. ATP contacts are provided by residues 204–207 (QTRN) and 298–301 (GRDH). Catalysis depends on residues T205, R206, and N207. R206 is a binding site for sulfate. Residue A302 coordinates sulfate. M340 is a binding site for ATP. Residues 402–581 (QGFTILLTGL…IMILESQNLV (180 aa)) are allosteric regulation domain; adenylyl-sulfate kinase-like. 3'-phosphoadenylyl sulfate-binding positions include 441-444 (EELR), 486-487 (TA), and R526.

This sequence in the N-terminal section; belongs to the sulfate adenylyltransferase family. It in the C-terminal section; belongs to the APS kinase family. As to quaternary structure, homohexamer. Dimer of trimers.

The protein localises to the cytoplasm. The enzyme catalyses sulfate + ATP + H(+) = adenosine 5'-phosphosulfate + diphosphate. It functions in the pathway sulfur metabolism; hydrogen sulfide biosynthesis; sulfite from sulfate: step 1/3. Its activity is regulated as follows. Allosterically inhibited by 3'-phosphoadenosine 5'-phosphosulfate (PAPS). Functionally, catalyzes the first intracellular reaction of sulfate assimilation, forming adenosine-5'-phosphosulfate (APS) from inorganic sulfate and ATP. Plays an important role in sulfate activation as a component of the biosynthesis pathway of sulfur-containing amino acids. In Cryptococcus neoformans var. grubii serotype A (strain H99 / ATCC 208821 / CBS 10515 / FGSC 9487) (Filobasidiella neoformans var. grubii), this protein is Sulfate adenylyltransferase.